The sequence spans 766 residues: MQIALVLLAIYGTTTTNTLRIDQCGENALGMQNGDIADSQITASSSFDKQSVGPQNARLHSELASGAWCPKPQINSKSYEFLQVTLNDTFLITSVETQGRYGNGTGREFASHYMIDYLRPGSQWIRYKNRTGHVYMDGNFDTTTPVIRVLDPPIVASRIRFVPSSKNTRTVCMRAEIHGCKHEGVTYYSTVPDGSRLDTLDFKDSMFEDSQIYTESGIKRGLGLLTDGFVAQASPFEKNQMNNSWIGWNRDTTDGRITILFEFEEVHNFTDVVLATFGNRIDGIDVIFSQDGKTFPLFSQISSSERQSLNNTSRRYDFRVPLHNRAGRKVRISIKFSSDWMFLTEVHFTSAANLTLLSEKIPPPSSAATQQLLVVCGIIFLTIFACVAYCVSVCLKRRQKNKSVDSNVKKDLIITHMGNKPTCHVFPSNGKLSNGHYEVANDILYARSQKSTLLSVSSKSTFSCRAIPPTWTDFNFPPPPEGREEHTYSQPVSPENSSNGSYKSVRKIQALKKYPSSALLIGKAIGEGKFTMIKECIIFGGLKCAHKSTKEEDCVHGTRALGDEIACLLQCGRHPRIVELFGVDESYNLLLEHVEYGCIRNFWMASEAPLDTEFLVRICKDIYSAMAYLESIRIVHGHFTPNNILMDGEFHAKVCSPRGPSHHAQLRYSAPESIVNNEFTHKSDAWAVATTVYEMAYQCRQRPYEELTNEQIVDNACALLDHQPNAVVPLMPTVFNYEILQLLTRCFRVDQLERPTFERLVKPFQD.

Residues methionine 1–threonine 18 form the signal peptide. Residues leucine 19 to leucine 372 lie on the Extracellular side of the membrane. 2 consecutive F5/8 type C domains span residues cysteine 24–cysteine 180 and serine 195–alanine 351. Cysteine 24 and cysteine 180 form a disulfide bridge. 7 N-linked (GlcNAc...) asparagine glycosylation sites follow: asparagine 87, asparagine 103, asparagine 129, asparagine 242, asparagine 268, asparagine 311, and asparagine 353. The chain crosses the membrane as a helical span at residues leucine 373–valine 393. The Cytoplasmic segment spans residues cysteine 394–aspartate 766. The disordered stretch occupies residues asparagine 475–serine 501. Positions tyrosine 488 to serine 501 are enriched in polar residues. The 248-residue stretch at leucine 519–aspartate 766 folds into the Protein kinase domain. Residues isoleucine 525 to isoleucine 533 and lysine 547 contribute to the ATP site.

This sequence belongs to the protein kinase superfamily. Tyr protein kinase family. Insulin receptor subfamily. As to expression, expressed in neurons in head and tail, some motoneurons in ventral nerve cord, in PVP interneurons, pharynx and stomato-intestinal muscle.

It is found in the cell membrane. The protein localises to the cell projection. It localises to the axon. Its subcellular location is the perikaryon. Receptor which, together with svh-4, is involved in axon guidance to establish the tracts for the ventral and dorsal nerve cords during nervous system development. May play a role in axon regeneration following injury in D-type motor neurons. This is Discoidin domain-containing receptor A from Caenorhabditis elegans.